The primary structure comprises 495 residues: tRNA modification GTPase MnmE (495 aa).

Residues arginine 28, glutamate 89, and lysine 128 each coordinate (6S)-5-formyl-5,6,7,8-tetrahydrofolate. The TrmE-type G domain maps to 223-417 (GVRIVLGGCP…LRAQTLHLLH (195 aa)). Position 233 (asparagine 233) interacts with K(+). GTP is bound by residues 233–238 (NAGKSS), 252–258 (SSVPGTT), and 277–280 (DTAG). Serine 237 is a binding site for Mg(2+). The K(+) site is built by serine 252, valine 254, and threonine 257. Threonine 258 serves as a coordination point for Mg(2+). A (6S)-5-formyl-5,6,7,8-tetrahydrofolate-binding site is contributed by lysine 495.

The protein belongs to the TRAFAC class TrmE-Era-EngA-EngB-Septin-like GTPase superfamily. TrmE GTPase family. Homodimer. Heterotetramer of two MnmE and two MnmG subunits. The cofactor is K(+).

The protein localises to the cytoplasm. Functionally, exhibits a very high intrinsic GTPase hydrolysis rate. Involved in the addition of a carboxymethylaminomethyl (cmnm) group at the wobble position (U34) of certain tRNAs, forming tRNA-cmnm(5)s(2)U34. The chain is tRNA modification GTPase MnmE from Treponema pallidum (strain Nichols).